A 130-amino-acid polypeptide reads, in one-letter code: Small ribosomal subunit protein uS9 (130 aa).

It belongs to the universal ribosomal protein uS9 family.

This chain is Small ribosomal subunit protein uS9, found in Agathobacter rectalis (strain ATCC 33656 / DSM 3377 / JCM 17463 / KCTC 5835 / VPI 0990) (Eubacterium rectale).